A 465-amino-acid polypeptide reads, in one-letter code: Hexokinase-4 (465 aa).

In terms of domain architecture, Hexokinase spans alanine 10–alanine 454. The segment at glutamate 67 to valine 203 is hexokinase small subdomain. Aspartate 78 to asparagine 83 is an ATP binding site. Residues serine 151–phenylalanine 152, threonine 168–lysine 169, and asparagine 204–aspartate 205 contribute to the substrate site. The interval asparagine 204–glutamate 443 is hexokinase large subdomain. Threonine 228 lines the ATP pocket. Substrate contacts are provided by asparagine 231, glutamate 256, and glutamate 290. Residues glycine 295–lysine 296, threonine 332–serine 336, and serine 411–leucine 415 each bind ATP.

Belongs to the hexokinase family. As to quaternary structure, monomer. Interacts with MIDN; the interaction occurs preferentially at low glucose levels and results in inhibition of hexokinase activity. Interacts with GCKR; leading to sequestration in the nucleus. Expression is restricted to the liver and pancreatic islets (at protein level).

It localises to the cytoplasm. The protein resides in the nucleus. It is found in the mitochondrion. It catalyses the reaction a D-hexose + ATP = a D-hexose 6-phosphate + ADP + H(+). It carries out the reaction D-fructose + ATP = D-fructose 6-phosphate + ADP + H(+). The catalysed reaction is D-glucose + ATP = D-glucose 6-phosphate + ADP + H(+). The enzyme catalyses D-mannose + ATP = D-mannose 6-phosphate + ADP + H(+). It participates in carbohydrate metabolism; hexose metabolism. It functions in the pathway carbohydrate degradation; glycolysis; D-glyceraldehyde 3-phosphate and glycerone phosphate from D-glucose: step 1/4. With respect to regulation, subject to allosteric regulation. Low glucose and high fructose-6-phosphate triggers association with the inhibitor GCKR followed by sequestration in the nucleus. Functionally, catalyzes the phosphorylation of hexose, such as D-glucose, D-fructose and D-mannose, to hexose 6-phosphate (D-glucose 6-phosphate, D-fructose 6-phosphate and D-mannose 6-phosphate, respectively). Compared to other hexokinases, has a weak affinity for D-glucose, and is effective only when glucose is abundant. Mainly expressed in pancreatic beta cells and the liver and constitutes a rate-limiting step in glucose metabolism in these tissues. Since insulin secretion parallels glucose metabolism and the low glucose affinity of GCK ensures that it can change its enzymatic activity within the physiological range of glucose concentrations, GCK acts as a glucose sensor in the pancreatic beta cell. In pancreas, plays an important role in modulating insulin secretion. In liver, helps to facilitate the uptake and conversion of glucose by acting as an insulin-sensitive determinant of hepatic glucose usage. Required to provide D-glucose 6-phosphate for the synthesis of glycogen. Mediates the initial step of glycolysis by catalyzing phosphorylation of D-glucose to D-glucose 6-phosphate. This is Hexokinase-4 from Rattus norvegicus (Rat).